Here is a 196-residue protein sequence, read N- to C-terminus: dTTP/UTP pyrophosphatase (196 aa).

Catalysis depends on aspartate 78, which acts as the Proton acceptor.

The protein belongs to the Maf family. YhdE subfamily. Requires a divalent metal cation as cofactor.

Its subcellular location is the cytoplasm. The catalysed reaction is dTTP + H2O = dTMP + diphosphate + H(+). The enzyme catalyses UTP + H2O = UMP + diphosphate + H(+). Nucleoside triphosphate pyrophosphatase that hydrolyzes dTTP and UTP. May have a dual role in cell division arrest and in preventing the incorporation of modified nucleotides into cellular nucleic acids. In Photobacterium profundum (strain SS9), this protein is dTTP/UTP pyrophosphatase.